The primary structure comprises 178 residues: Probable major fimbrial subunit LpfA (178 aa).

A signal peptide spans 1–24 (MEFFMKKVVFALTALALTSGTVFA).

Belongs to the fimbrial protein family.

It localises to the fimbrium. Its function is as follows. Part of the lpfABCC'DE fimbrial operon. LP fimbriae may participate in the interaction with eukaryotic cells by assisting in microcolony formation. This Escherichia coli O157:H7 protein is Probable major fimbrial subunit LpfA (lpfA).